Here is an 873-residue protein sequence, read N- to C-terminus: DNA mismatch repair protein MutS (873 aa).

Position 601-608 (Gly-601–Ser-608) interacts with ATP.

It belongs to the DNA mismatch repair MutS family.

This protein is involved in the repair of mismatches in DNA. It is possible that it carries out the mismatch recognition step. This protein has a weak ATPase activity. The polypeptide is DNA mismatch repair protein MutS (Staphylococcus epidermidis (strain ATCC 12228 / FDA PCI 1200)).